The primary structure comprises 357 residues: Chorismate synthase (357 aa).

Arg48 and Arg54 together coordinate NADP(+). FMN-binding positions include 125–127 (RSS), 243–244 (NA), Gly283, 298–302 (KPTSS), and Arg324.

It belongs to the chorismate synthase family. Homotetramer. FMNH2 serves as cofactor.

It carries out the reaction 5-O-(1-carboxyvinyl)-3-phosphoshikimate = chorismate + phosphate. It participates in metabolic intermediate biosynthesis; chorismate biosynthesis; chorismate from D-erythrose 4-phosphate and phosphoenolpyruvate: step 7/7. Its function is as follows. Catalyzes the anti-1,4-elimination of the C-3 phosphate and the C-6 proR hydrogen from 5-enolpyruvylshikimate-3-phosphate (EPSP) to yield chorismate, which is the branch point compound that serves as the starting substrate for the three terminal pathways of aromatic amino acid biosynthesis. This reaction introduces a second double bond into the aromatic ring system. This chain is Chorismate synthase, found in Pasteurella multocida (strain Pm70).